The sequence spans 232 residues: RNA chaperone ProQ (232 aa).

Residues 105-182 (EAKARVQAQR…REEQHTPVSD (78 aa)) form a disordered region. Positions 117–136 (QQAKKREAAAAAGEKEDAPR) are enriched in basic and acidic residues. Positions 137 to 146 (RERKPRPTTP) are enriched in basic residues. Residues 147-177 (RRKEGAERKPRAQKPVEKAPKTAKAPREEQH) are compositionally biased toward basic and acidic residues.

The protein belongs to the ProQ family.

It localises to the cytoplasm. In terms of biological role, RNA chaperone with significant RNA binding, RNA strand exchange and RNA duplexing activities. May regulate ProP activity through an RNA-based, post-transcriptional mechanism. This is RNA chaperone ProQ from Shigella dysenteriae serotype 1 (strain Sd197).